Consider the following 475-residue polypeptide: Arginine biosynthesis bifunctional protein ArgJ 1, mitochondrial (475 aa).

Residues Thr204, Lys233, Thr244, Glu331, Asn470, and Thr475 each coordinate substrate. The active-site Nucleophile is Thr244.

It belongs to the ArgJ family. In terms of assembly, heterodimer of an alpha and a beta chain. The alpha and beta chains are autoproteolytically processed from a single precursor protein within the mitochondrion.

Its subcellular location is the mitochondrion matrix. It carries out the reaction N(2)-acetyl-L-ornithine + L-glutamate = N-acetyl-L-glutamate + L-ornithine. The enzyme catalyses L-glutamate + acetyl-CoA = N-acetyl-L-glutamate + CoA + H(+). The protein operates within amino-acid biosynthesis; L-arginine biosynthesis; L-ornithine and N-acetyl-L-glutamate from L-glutamate and N(2)-acetyl-L-ornithine (cyclic): step 1/1. It participates in amino-acid biosynthesis; L-arginine biosynthesis; N(2)-acetyl-L-ornithine from L-glutamate: step 1/4. Catalyzes two activities which are involved in the cyclic version of arginine biosynthesis: the synthesis of acetylglutamate from glutamate and acetyl-CoA, and of ornithine by transacetylation between acetylornithine and glutamate. This is Arginine biosynthesis bifunctional protein ArgJ 1, mitochondrial from Botryotinia fuckeliana (strain B05.10) (Noble rot fungus).